Here is a 196-residue protein sequence, read N- to C-terminus: Ribosome maturation factor RimP (196 aa).

It belongs to the RimP family.

It localises to the cytoplasm. Functionally, required for maturation of 30S ribosomal subunits. This chain is Ribosome maturation factor RimP, found in Lawsonia intracellularis (strain PHE/MN1-00).